A 130-amino-acid chain; its full sequence is Sec-independent protein translocase protein TatB (130 aa).

The helical transmembrane segment at 2-22 (FANIGWGEMLVLVVVGLVVLG) threads the bilayer. Residues 108–130 (DAVASAQEAPDEPVRPPFDSDAT) form a disordered region.

This sequence belongs to the TatB family. As to quaternary structure, the Tat system comprises two distinct complexes: a TatABC complex, containing multiple copies of TatA, TatB and TatC subunits, and a separate TatA complex, containing only TatA subunits. Substrates initially bind to the TatABC complex, which probably triggers association of the separate TatA complex to form the active translocon.

The protein localises to the cell membrane. Its function is as follows. Part of the twin-arginine translocation (Tat) system that transports large folded proteins containing a characteristic twin-arginine motif in their signal peptide across membranes. Together with TatC, TatB is part of a receptor directly interacting with Tat signal peptides. TatB may form an oligomeric binding site that transiently accommodates folded Tat precursor proteins before their translocation. The chain is Sec-independent protein translocase protein TatB from Mycobacterium ulcerans (strain Agy99).